Here is a 403-residue protein sequence, read N- to C-terminus: Cysteine desulfurase IscS (403 aa).

Pyridoxal 5'-phosphate is bound by residues 75 to 76, Asn155, Gln183, and 203 to 205; these read AT and SAH. Position 206 is an N6-(pyridoxal phosphate)lysine (Lys206). Residue Thr243 coordinates pyridoxal 5'-phosphate. Cys328 acts as the Cysteine persulfide intermediate in catalysis. Cys328 is a [2Fe-2S] cluster binding site.

The protein belongs to the class-V pyridoxal-phosphate-dependent aminotransferase family. NifS/IscS subfamily. Homodimer. Forms a heterotetramer with IscU, interacts with other sulfur acceptors. The cofactor is pyridoxal 5'-phosphate.

The protein resides in the cytoplasm. It carries out the reaction (sulfur carrier)-H + L-cysteine = (sulfur carrier)-SH + L-alanine. Its pathway is cofactor biosynthesis; iron-sulfur cluster biosynthesis. In terms of biological role, master enzyme that delivers sulfur to a number of partners involved in Fe-S cluster assembly, tRNA modification or cofactor biosynthesis. Catalyzes the removal of elemental sulfur atoms from cysteine to produce alanine. Functions as a sulfur delivery protein for Fe-S cluster synthesis onto IscU, an Fe-S scaffold assembly protein, as well as other S acceptor proteins. The sequence is that of Cysteine desulfurase IscS from Psychromonas ingrahamii (strain DSM 17664 / CCUG 51855 / 37).